We begin with the raw amino-acid sequence, 192 residues long: Cytidylate kinase (192 aa).

Residue 7–15 (GPPGSGKST) coordinates ATP.

Belongs to the cytidylate kinase family. Type 2 subfamily.

It localises to the cytoplasm. The catalysed reaction is CMP + ATP = CDP + ADP. The enzyme catalyses dCMP + ATP = dCDP + ADP. The protein is Cytidylate kinase of Halorubrum lacusprofundi (strain ATCC 49239 / DSM 5036 / JCM 8891 / ACAM 34).